The sequence spans 122 residues: Large ribosomal subunit protein uL14 (122 aa).

The protein belongs to the universal ribosomal protein uL14 family. As to quaternary structure, part of the 50S ribosomal subunit. Forms a cluster with proteins L3 and L19. In the 70S ribosome, L14 and L19 interact and together make contacts with the 16S rRNA in bridges B5 and B8.

Functionally, binds to 23S rRNA. Forms part of two intersubunit bridges in the 70S ribosome. This chain is Large ribosomal subunit protein uL14, found in Rhodopirellula baltica (strain DSM 10527 / NCIMB 13988 / SH1).